The sequence spans 154 residues: 3-hydroxyacyl-[acyl-carrier-protein] dehydratase FabZ (154 aa).

Residue histidine 54 is part of the active site.

Belongs to the thioester dehydratase family. FabZ subfamily.

The protein localises to the cytoplasm. The enzyme catalyses a (3R)-hydroxyacyl-[ACP] = a (2E)-enoyl-[ACP] + H2O. Its function is as follows. Involved in unsaturated fatty acids biosynthesis. Catalyzes the dehydration of short chain beta-hydroxyacyl-ACPs and long chain saturated and unsaturated beta-hydroxyacyl-ACPs. This is 3-hydroxyacyl-[acyl-carrier-protein] dehydratase FabZ from Chlamydia abortus (strain DSM 27085 / S26/3) (Chlamydophila abortus).